The chain runs to 173 residues: Endoribonuclease YbeY (173 aa).

Zn(2+)-binding residues include histidine 126, histidine 130, and histidine 136.

The protein belongs to the endoribonuclease YbeY family. It depends on Zn(2+) as a cofactor.

It is found in the cytoplasm. Its function is as follows. Single strand-specific metallo-endoribonuclease involved in late-stage 70S ribosome quality control and in maturation of the 3' terminus of the 16S rRNA. This Sinorhizobium fredii (strain NBRC 101917 / NGR234) protein is Endoribonuclease YbeY.